The following is a 266-amino-acid chain: 4-diphosphocytidyl-2-C-methyl-D-erythritol kinase (266 aa).

Lys-11 is an active-site residue. Position 103 to 113 (103 to 113 (PTFAGLGGGSS)) interacts with ATP. Residue Asp-145 is part of the active site.

Belongs to the GHMP kinase family. IspE subfamily.

The enzyme catalyses 4-CDP-2-C-methyl-D-erythritol + ATP = 4-CDP-2-C-methyl-D-erythritol 2-phosphate + ADP + H(+). It participates in isoprenoid biosynthesis; isopentenyl diphosphate biosynthesis via DXP pathway; isopentenyl diphosphate from 1-deoxy-D-xylulose 5-phosphate: step 3/6. Functionally, catalyzes the phosphorylation of the position 2 hydroxy group of 4-diphosphocytidyl-2C-methyl-D-erythritol. The sequence is that of 4-diphosphocytidyl-2-C-methyl-D-erythritol kinase from Sulfurimonas denitrificans (strain ATCC 33889 / DSM 1251) (Thiomicrospira denitrificans (strain ATCC 33889 / DSM 1251)).